A 404-amino-acid polypeptide reads, in one-letter code: Chorismate synthase (404 aa).

Arginine 47 serves as a coordination point for NADP(+). Residues 156 to 158, 281 to 282, glycine 321, 336 to 340, and arginine 363 each bind FMN; these read RSS, NA, and KPTST.

It belongs to the chorismate synthase family. As to quaternary structure, homotetramer. The cofactor is FMNH2.

It catalyses the reaction 5-O-(1-carboxyvinyl)-3-phosphoshikimate = chorismate + phosphate. It participates in metabolic intermediate biosynthesis; chorismate biosynthesis; chorismate from D-erythrose 4-phosphate and phosphoenolpyruvate: step 7/7. Functionally, catalyzes the anti-1,4-elimination of the C-3 phosphate and the C-6 proR hydrogen from 5-enolpyruvylshikimate-3-phosphate (EPSP) to yield chorismate, which is the branch point compound that serves as the starting substrate for the three terminal pathways of aromatic amino acid biosynthesis. This reaction introduces a second double bond into the aromatic ring system. The chain is Chorismate synthase from Rhodopirellula baltica (strain DSM 10527 / NCIMB 13988 / SH1).